Here is a 325-residue protein sequence, read N- to C-terminus: Biotin synthase (325 aa).

In terms of domain architecture, Radical SAM core spans 43-262 (CSVETAQLLS…VAVARLLMPR (220 aa)). The [4Fe-4S] cluster site is built by cysteine 58, cysteine 62, and cysteine 65. 4 residues coordinate [2Fe-2S] cluster: cysteine 102, cysteine 133, cysteine 193, and arginine 266.

It belongs to the radical SAM superfamily. Biotin synthase family. Homodimer. Requires [4Fe-4S] cluster as cofactor. The cofactor is [2Fe-2S] cluster.

It carries out the reaction (4R,5S)-dethiobiotin + (sulfur carrier)-SH + 2 reduced [2Fe-2S]-[ferredoxin] + 2 S-adenosyl-L-methionine = (sulfur carrier)-H + biotin + 2 5'-deoxyadenosine + 2 L-methionine + 2 oxidized [2Fe-2S]-[ferredoxin]. Its pathway is cofactor biosynthesis; biotin biosynthesis; biotin from 7,8-diaminononanoate: step 2/2. Catalyzes the conversion of dethiobiotin (DTB) to biotin by the insertion of a sulfur atom into dethiobiotin via a radical-based mechanism. This chain is Biotin synthase, found in Azorhizobium caulinodans (strain ATCC 43989 / DSM 5975 / JCM 20966 / LMG 6465 / NBRC 14845 / NCIMB 13405 / ORS 571).